The following is an 828-amino-acid chain: Periplasmic nitrate reductase (828 aa).

Positions Met1–Ala31 form a signal peptide, tat-type signal. In terms of domain architecture, 4Fe-4S Mo/W bis-MGD-type spans Ile39–Asp95. 4 residues coordinate [4Fe-4S] cluster: Cys46, Cys49, Cys53, and Cys81. Mo-bis(molybdopterin guanine dinucleotide) contacts are provided by residues Lys83, Gln150, Asn175, Cys179, Trp212–Met219, Ser243–His247, Gln262–Asp264, Met372, Gln376, Asn482, Ser508–Asp509, Lys531, Asp558, and Thr718–Thr727. Residue Phe794 coordinates substrate. Residues Asn802 and Lys819 each contribute to the Mo-bis(molybdopterin guanine dinucleotide) site.

Belongs to the prokaryotic molybdopterin-containing oxidoreductase family. NasA/NapA/NarB subfamily. In terms of assembly, component of the periplasmic nitrate reductase NapAB complex composed of NapA and NapB. It depends on [4Fe-4S] cluster as a cofactor. The cofactor is Mo-bis(molybdopterin guanine dinucleotide). Post-translationally, predicted to be exported by the Tat system. The position of the signal peptide cleavage has not been experimentally proven.

The protein localises to the periplasm. It catalyses the reaction 2 Fe(II)-[cytochrome] + nitrate + 2 H(+) = 2 Fe(III)-[cytochrome] + nitrite + H2O. In terms of biological role, catalytic subunit of the periplasmic nitrate reductase complex NapAB. Receives electrons from NapB and catalyzes the reduction of nitrate to nitrite. The protein is Periplasmic nitrate reductase of Shigella boydii serotype 4 (strain Sb227).